A 1166-amino-acid chain; its full sequence is Folliculin-interacting protein 1 (1166 aa).

A uDENN FNIP1/2-type domain is found at 37 to 478; it reads FDPSQIRLIV…TVMPNGQPPI (442 aa). Ser220, Ser230, Ser232, and Ser261 each carry phosphoserine; by AMPK. A Phosphothreonine modification is found at Thr294. The residue at position 296 (Ser296) is a Phosphoserine. Residues 486–1092 form the cDENN FNIP1/2-type domain; sequence SSQSVDMLAK…VSNLLHSTLQ (607 aa). Phosphoserine; by AMPK is present on Ser593. Position 594 is a phosphoserine (Ser594). Zn(2+) contacts are provided by Cys608 and Cys610. The Cys degron motif lies at 608–615; sequence CNCKYCSH. The KY-finger stretch occupies residues 611-612; the sequence is KY. Cys613 and His615 together coordinate Zn(2+). Residues Ser760 and Ser763 each carry the phosphoserine modification. 2 disordered regions span residues 781-817 and 912-956; these read TKPL…VSEE and LVPH…HDMT. 2 stretches are compositionally biased toward basic and acidic residues: residues 783 to 805 and 915 to 925; these read PLKE…KDQS and HGDKESSDKKI. The segment at 929–1166 is interaction with HSP90AA1; it reads TEWDIPRNES…HSPYVAQILL (238 aa). At Ser938 the chain carries Phosphoserine; alternate; by CK2. O-linked (GlcNAc) serine; alternate glycosylation is present at Ser938. Residues Ser939, Ser941, Ser946, and Ser948 each carry the phosphoserine; by CK2 modification. The dDENN FNIP1/2-type domain maps to 1102 to 1157; sequence FCVMHLEDRLQELYFKSKMLSEYLRGQMRVHVKELGVVLGIESSDLPLLAAVASTH. Lys1119 participates in a covalent cross-link: Glycyl lysine isopeptide (Lys-Gly) (interchain with G-Cter in ubiquitin).

This sequence belongs to the FNIP family. Homodimer and homomultimer. Heterodimer and heteromultimer with FNIP2. Interacts with FLCN (via C-terminus). Component of the lysosomal folliculin complex (LFC), composed of FLCN, FNIP1 (or FNIP2), RagA/RRAGA or RagB/RRAGB GDP-bound, RagC/RRAGC or RagD/RRAGD GTP-bound, and Ragulator. Interacts with HSPCA and with the PRKAA1, PRKAB1 and PRKAG1 subunits of 5'-AMP-activated protein kinase (AMPK). Phosphorylated FLCN and AMPK are preferentially bound. Interacts with HSP70, STIP1, PTGES3, CDC37, BRAF, GCR and CDK4. Interacts with HSP90AA1; the interaction inhibits HSP90AA1 ATPase activity. Interacts with ATP2A2. In terms of processing, phosphorylated by AMPK in response to energetic stress. Phosphorylation by AMPK in response to mitochondrial damage promotes inactivation of the non-canonical mTORC1 signaling, nuclear translocation of TFEB and TFE3, inducing transcription of lysosomal or autophagy genes. Sequential phosphorylation by CK2 promotes its gradual interaction with HSP90AA1/Hsp90. Priming phosphorylation at Ser-938 is followed by relay phosphorylation at Ser-939, Ser-941, Ser-946 and Ser-948, promoting its gradual interaction with HSP90AA1/Hsp90. This leads to incremental inhibition of HSP90AA1/Hsp90 ATPase activity and gradual activation of both kinase and non-kinase clients. Dephosphorylated by protein phosphatase 5 (PP5), promoting glycosylation by OGT. Post-translationally, glcNAcylation at Ser-938 by OGT following dephosphorylation by protein phosphatase 5 (PP5) promotes ubiquitination and degradation by the proteasome. Ubiquitinated through 'Lys-11' linkage of ubiquitin moieties at Lys-1119 following glycosylation by OGT, leading to its degradation by the proteasome. Ubiquitinated by the CRL2(FEM1B) complex in response to reductive stress: reductive stress causes reduction of the conserved Cys degron in FNIP1, followed by zinc-binding, zinc acting as a molecular glue for recognition by the CRL2(FEM1B) complex. Ubiquitination leads to FNIP1 degradation, and activation of mitochondria to recalibrate reactive oxygen species (ROS). In terms of processing, oxidation of the Cys degron in normal conditions promotes its stabilization by preventing recognition and ubiquitination by the CRL2(FEM1B) complex. In terms of tissue distribution, strong expression is found in the heart, liver placenta, muscle, nasal mucosa, salivary gland and uvula and moderate expression in kidney and lung. Higher levels detected in clear cell renal cell carcinoma (RCC) and chromophobe RCC than in normal kidney tissue. Expressed in peripheral blood mononuclear cells.

The protein localises to the lysosome membrane. It is found in the cytoplasm. Its subcellular location is the cytosol. Binding partner of the GTPase-activating protein FLCN: involved in the cellular response to amino acid availability by regulating the non-canonical mTORC1 signaling cascade controlling the MiT/TFE factors TFEB and TFE3. Required to promote FLCN recruitment to lysosomes and interaction with Rag GTPases, leading to activation of the non-canonical mTORC1 signaling. In low-amino acid conditions, component of the lysosomal folliculin complex (LFC) on the membrane of lysosomes, which inhibits the GTPase-activating activity of FLCN, thereby inactivating mTORC1 and promoting nuclear translocation of TFEB and TFE3. Upon amino acid restimulation, disassembly of the LFC complex liberates the GTPase-activating activity of FLCN, leading to activation of mTORC1 and subsequent inactivation of TFEB and TFE3. Together with FLCN, regulates autophagy: following phosphorylation by ULK1, interacts with GABARAP and promotes autophagy. In addition to its role in mTORC1 signaling, also acts as a co-chaperone of HSP90AA1/Hsp90: following gradual phosphorylation by CK2, inhibits the ATPase activity of HSP90AA1/Hsp90, leading to activate both kinase and non-kinase client proteins of HSP90AA1/Hsp90. Acts as a scaffold to load client protein FLCN onto HSP90AA1/Hsp90. Competes with the activating co-chaperone AHSA1 for binding to HSP90AA1, thereby providing a reciprocal regulatory mechanism for chaperoning of client proteins. Also acts as a core component of the reductive stress response by inhibiting activation of mitochondria in normal conditions: in response to reductive stress, the conserved Cys degron is reduced, leading to recognition and polyubiquitylation by the CRL2(FEM1B) complex, followed by proteasomal. Required for B-cell development. The sequence is that of Folliculin-interacting protein 1 from Homo sapiens (Human).